We begin with the raw amino-acid sequence, 343 residues long: Heat-inducible transcription repressor HrcA (343 aa).

This sequence belongs to the HrcA family.

Negative regulator of class I heat shock genes (grpE-dnaK-dnaJ and groELS operons). Prevents heat-shock induction of these operons. The chain is Heat-inducible transcription repressor HrcA from Mycobacterium leprae (strain Br4923).